The primary structure comprises 161 residues: MKLAVYPGSFDPVTNGHIDILEKSSKIFDEIIVAVIHNVTKKALFSLDERVKLIEESTRHLNNVRVDAFSGLLANYLADKQACAIIRGLRTVTDFEYEMHMAMMNKKLIPNIDTMFFMSDSQYTFISSSAVKEAALLGGDVGSLVPAVVKAGLEEKMLNDG.

Serine 9 contributes to the substrate binding site. ATP is bound by residues 9–10 and histidine 17; that span reads SF. Substrate is bound by residues lysine 41, leucine 73, and arginine 87. ATP is bound by residues 88 to 90, glutamate 98, and 123 to 129; these read GLR and YTFISSS.

Belongs to the bacterial CoaD family. As to quaternary structure, homohexamer. Mg(2+) serves as cofactor.

The protein resides in the cytoplasm. The enzyme catalyses (R)-4'-phosphopantetheine + ATP + H(+) = 3'-dephospho-CoA + diphosphate. It participates in cofactor biosynthesis; coenzyme A biosynthesis; CoA from (R)-pantothenate: step 4/5. In terms of biological role, reversibly transfers an adenylyl group from ATP to 4'-phosphopantetheine, yielding dephospho-CoA (dPCoA) and pyrophosphate. This chain is Phosphopantetheine adenylyltransferase, found in Syntrophomonas wolfei subsp. wolfei (strain DSM 2245B / Goettingen).